Here is a 66-residue protein sequence, read N- to C-terminus: Putative membrane protein insertion efficiency factor (66 aa).

This sequence belongs to the UPF0161 family.

The protein localises to the cell inner membrane. Could be involved in insertion of integral membrane proteins into the membrane. This is Putative membrane protein insertion efficiency factor from Parasynechococcus marenigrum (strain WH8102).